A 209-amino-acid polypeptide reads, in one-letter code: Dephospho-CoA kinase (209 aa).

A DPCK domain is found at Arg13–Asn209. Ala21 to Thr26 is an ATP binding site.

This sequence belongs to the CoaE family.

It is found in the cytoplasm. It catalyses the reaction 3'-dephospho-CoA + ATP = ADP + CoA + H(+). The protein operates within cofactor biosynthesis; coenzyme A biosynthesis; CoA from (R)-pantothenate: step 5/5. Functionally, catalyzes the phosphorylation of the 3'-hydroxyl group of dephosphocoenzyme A to form coenzyme A. In Synechococcus elongatus (strain ATCC 33912 / PCC 7942 / FACHB-805) (Anacystis nidulans R2), this protein is Dephospho-CoA kinase.